The chain runs to 579 residues: Adipocyte plasma membrane-associated protein Hemomucin (579 aa).

At 1-6 (MGLLYA) the chain is on the cytoplasmic side. A helical transmembrane segment spans residues 7–29 (LRVRIMNFMIFFLLIILMPGLPP). Over 30 to 579 (RTTFPFKDYI…INKQGVNVEL (550 aa)) the chain is Extracellular. N213 and N217 each carry an N-linked (GlcNAc...) asparagine glycan. Positions 427-579 (GLEASIGVPP…INKQGVNVEL (153 aa)) are disordered. Low complexity predominate over residues 435–529 (PPSKATPKPK…PKPTTTTTPT (95 aa)).

The protein belongs to the strictosidine synthase family. In terms of assembly, interacts with sturkopf. In terms of processing, O-glycosylated. Glycosylated in the ovary of 4 day old females. Phosphorylated. In terms of tissue distribution, detected in ovaries (at protein level). In larvae, detected in the fat body, salivary glands, imaginal disks and gut (at protein level). In adults, expressed in the cardia, and in regions of the ventriculus including the area posterior to the cardia. In females also expressed in follicle cells.

It is found in the cell membrane. Functionally, transmembrane mucin that may be involved in cellular adhesion and the innate immune response. Membrane-tethered mucins are involved in many cell surface functions and form a physical barrier around cells to regulate cell-cell and/or cell-substrate interactions, and protect against pathogens or harmful extracellular conditions. This mucin likely acts in hemocyte adhesion as it is released from hemocytes during coagulation and is also able to bind lipophorin particles which form part of the hemocyte coagulogen. Able to induce expression of the antibacterial proteins in the presence of GalNAc-specific lectins and so probably also functions in the innate immune response. This Drosophila melanogaster (Fruit fly) protein is Adipocyte plasma membrane-associated protein Hemomucin.